The sequence spans 77 residues: Putative defensin-like protein 162 (77 aa).

The N-terminal stretch at 1-27 (MAKQLCSYMFISMFILSAFLALPSAEG) is a signal peptide. 4 cysteine pairs are disulfide-bonded: Cys-34/Cys-77, Cys-44/Cys-63, Cys-49/Cys-71, and Cys-53/Cys-73.

The protein belongs to the DEFL family.

It is found in the secreted. The protein is Putative defensin-like protein 162 (LCR37) of Arabidopsis thaliana (Mouse-ear cress).